A 265-amino-acid polypeptide reads, in one-letter code: Tryptophan synthase alpha chain (265 aa).

Active-site proton acceptor residues include E49 and D60.

The protein belongs to the TrpA family. As to quaternary structure, tetramer of two alpha and two beta chains.

The catalysed reaction is (1S,2R)-1-C-(indol-3-yl)glycerol 3-phosphate + L-serine = D-glyceraldehyde 3-phosphate + L-tryptophan + H2O. It participates in amino-acid biosynthesis; L-tryptophan biosynthesis; L-tryptophan from chorismate: step 5/5. The alpha subunit is responsible for the aldol cleavage of indoleglycerol phosphate to indole and glyceraldehyde 3-phosphate. The polypeptide is Tryptophan synthase alpha chain (Ralstonia nicotianae (strain ATCC BAA-1114 / GMI1000) (Ralstonia solanacearum)).